The sequence spans 71 residues: Pro-MCH (71 aa).

The signal sequence occupies residues 1-20 (AKMNLSSYILILTFSLFSQG).

This sequence belongs to the melanin-concentrating hormone family.

The protein localises to the secreted. This chain is Pro-MCH (PMCH), found in Pan paniscus (Pygmy chimpanzee).